Reading from the N-terminus, the 91-residue chain is Cell division protein ZapA (91 aa).

Residues 59-86 (TAVNIANEYLKLKEEYDRLAAKLRREKG) adopt a coiled-coil conformation.

The protein belongs to the ZapA family. Type 2 subfamily. Homodimer. Interacts with FtsZ.

It localises to the cytoplasm. In terms of biological role, activator of cell division through the inhibition of FtsZ GTPase activity, therefore promoting FtsZ assembly into bundles of protofilaments necessary for the formation of the division Z ring. It is recruited early at mid-cell but it is not essential for cell division. The sequence is that of Cell division protein ZapA from Geobacillus thermodenitrificans (strain NG80-2).